The sequence spans 319 residues: 4-hydroxy-3-methylbut-2-enyl diphosphate reductase (319 aa).

Cysteine 15 contacts [4Fe-4S] cluster. (2E)-4-hydroxy-3-methylbut-2-enyl diphosphate is bound by residues histidine 44 and histidine 77. 2 residues coordinate dimethylallyl diphosphate: histidine 44 and histidine 77. 2 residues coordinate isopentenyl diphosphate: histidine 44 and histidine 77. Cysteine 99 serves as a coordination point for [4Fe-4S] cluster. Histidine 127 contributes to the (2E)-4-hydroxy-3-methylbut-2-enyl diphosphate binding site. Histidine 127 serves as a coordination point for dimethylallyl diphosphate. Isopentenyl diphosphate is bound at residue histidine 127. The active-site Proton donor is the glutamate 129. Threonine 167 provides a ligand contact to (2E)-4-hydroxy-3-methylbut-2-enyl diphosphate. A [4Fe-4S] cluster-binding site is contributed by cysteine 197. Positions 225, 226, 227, and 269 each coordinate (2E)-4-hydroxy-3-methylbut-2-enyl diphosphate. Dimethylallyl diphosphate is bound by residues serine 225, serine 226, asparagine 227, and serine 269. Residues serine 225, serine 226, asparagine 227, and serine 269 each contribute to the isopentenyl diphosphate site.

Belongs to the IspH family. It depends on [4Fe-4S] cluster as a cofactor.

It carries out the reaction isopentenyl diphosphate + 2 oxidized [2Fe-2S]-[ferredoxin] + H2O = (2E)-4-hydroxy-3-methylbut-2-enyl diphosphate + 2 reduced [2Fe-2S]-[ferredoxin] + 2 H(+). The enzyme catalyses dimethylallyl diphosphate + 2 oxidized [2Fe-2S]-[ferredoxin] + H2O = (2E)-4-hydroxy-3-methylbut-2-enyl diphosphate + 2 reduced [2Fe-2S]-[ferredoxin] + 2 H(+). It participates in isoprenoid biosynthesis; dimethylallyl diphosphate biosynthesis; dimethylallyl diphosphate from (2E)-4-hydroxy-3-methylbutenyl diphosphate: step 1/1. The protein operates within isoprenoid biosynthesis; isopentenyl diphosphate biosynthesis via DXP pathway; isopentenyl diphosphate from 1-deoxy-D-xylulose 5-phosphate: step 6/6. Catalyzes the conversion of 1-hydroxy-2-methyl-2-(E)-butenyl 4-diphosphate (HMBPP) into a mixture of isopentenyl diphosphate (IPP) and dimethylallyl diphosphate (DMAPP). Acts in the terminal step of the DOXP/MEP pathway for isoprenoid precursor biosynthesis. The chain is 4-hydroxy-3-methylbut-2-enyl diphosphate reductase from Rhodopirellula baltica (strain DSM 10527 / NCIMB 13988 / SH1).